A 344-amino-acid polypeptide reads, in one-letter code: Phosphate acyltransferase (344 aa).

This sequence belongs to the PlsX family. Homodimer. Probably interacts with PlsY.

The protein localises to the cytoplasm. The enzyme catalyses a fatty acyl-[ACP] + phosphate = an acyl phosphate + holo-[ACP]. It participates in lipid metabolism; phospholipid metabolism. Functionally, catalyzes the reversible formation of acyl-phosphate (acyl-PO(4)) from acyl-[acyl-carrier-protein] (acyl-ACP). This enzyme utilizes acyl-ACP as fatty acyl donor, but not acyl-CoA. The polypeptide is Phosphate acyltransferase (Enterobacter sp. (strain 638)).